Here is a 470-residue protein sequence, read N- to C-terminus: L-fuculokinase (470 aa).

Belongs to the FGGY kinase family. A divalent metal cation serves as cofactor.

The catalysed reaction is L-fuculose + ATP = L-fuculose 1-phosphate + ADP + H(+). It functions in the pathway carbohydrate degradation; L-fucose degradation; L-lactaldehyde and glycerone phosphate from L-fucose: step 2/3. Catalyzes the phosphorylation of L-fuculose. The protein is L-fuculokinase of Haemophilus influenzae (strain ATCC 51907 / DSM 11121 / KW20 / Rd).